The primary structure comprises 756 residues: Conserved oligomeric Golgi complex subunit 2 (756 aa).

Residues 62–82 (RSELRSHLASLNRELVDLINR) are a coiled coil. The interval 173–199 (WQNEDANSMGRSSMNDENSTQQDGTTM) is disordered.

It belongs to the COG2 family. Homodimer. Component of the conserved oligomeric Golgi complex which is composed of eight different subunits and is required for normal Golgi morphology and localization. Binds to COG3 and COG4. Interacts with FPP3/VETH1 and FPP2/VETH2; this interaction promotes the association between cortical microtubules and EXO70A1. Binds to SEC15B, and, possibly, with EXO70A1, SEC3A and SEC10A.

Its subcellular location is the golgi apparatus membrane. Required for normal Golgi morphology and function. Ensures, when in complex with FPP3/VETH1 and FPP2/VETH2, the correct secondary cell wall (SCW) deposition pattern by recruiting exocyst components to cortical microtubules in xylem cells during secondary cell wall deposition. This chain is Conserved oligomeric Golgi complex subunit 2, found in Arabidopsis thaliana (Mouse-ear cress).